The following is a 264-amino-acid chain: Phosphonoacetaldehyde hydrolase (264 aa).

Asp-9 (nucleophile) is an active-site residue. Mg(2+)-binding residues include Asp-9 and Ala-11. Lys-50 functions as the Schiff-base intermediate with substrate in the catalytic mechanism. Asp-183 serves as a coordination point for Mg(2+).

It belongs to the HAD-like hydrolase superfamily. PhnX family. In terms of assembly, homodimer. The cofactor is Mg(2+).

The enzyme catalyses phosphonoacetaldehyde + H2O = acetaldehyde + phosphate + H(+). Its function is as follows. Involved in phosphonate degradation. The sequence is that of Phosphonoacetaldehyde hydrolase from Bacillus cereus (strain ATCC 10987 / NRS 248).